The sequence spans 376 residues: Chaperone protein DnaJ (376 aa).

One can recognise a J domain in the interval 5 to 72 (DFYEVLGVPK…QKRAAYDQYG (68 aa)). The CR-type zinc-finger motif lies at 136-214 (GKEAQIRIPS…CHGQGRVKKQ (79 aa)). Residues Cys-149, Cys-152, Cys-166, Cys-169, Cys-188, Cys-191, Cys-202, and Cys-205 each coordinate Zn(2+). CXXCXGXG motif repeat units follow at residues 149–156 (CETCHGSG), 166–173 (CGTCQGSG), 188–195 (CPHCRGTG), and 202–209 (CTACHGQG). 2 disordered regions span residues 227-246 (DGMR…GGPP) and 352-376 (SLKK…SFFS). The span at 237–246 (GEPGTNGGPP) shows a compositional bias: gly residues. Residues 367 to 376 (WTDRLKSFFS) are compositionally biased toward basic and acidic residues.

Belongs to the DnaJ family. As to quaternary structure, homodimer. Zn(2+) serves as cofactor.

Its subcellular location is the cytoplasm. Participates actively in the response to hyperosmotic and heat shock by preventing the aggregation of stress-denatured proteins and by disaggregating proteins, also in an autonomous, DnaK-independent fashion. Unfolded proteins bind initially to DnaJ; upon interaction with the DnaJ-bound protein, DnaK hydrolyzes its bound ATP, resulting in the formation of a stable complex. GrpE releases ADP from DnaK; ATP binding to DnaK triggers the release of the substrate protein, thus completing the reaction cycle. Several rounds of ATP-dependent interactions between DnaJ, DnaK and GrpE are required for fully efficient folding. Also involved, together with DnaK and GrpE, in the DNA replication of plasmids through activation of initiation proteins. This is Chaperone protein DnaJ from Acidovorax sp. (strain JS42).